A 285-amino-acid chain; its full sequence is Protoheme IX farnesyltransferase (285 aa).

Transmembrane regions (helical) follow at residues alanine 16–phenylalanine 36, tryptophan 40–isoleucine 60, leucine 106–valine 126, tryptophan 136–alanine 156, serine 165–leucine 185, isoleucine 217–isoleucine 237, and tyrosine 265–leucine 285.

Belongs to the UbiA prenyltransferase family. Protoheme IX farnesyltransferase subfamily.

It localises to the cell membrane. The catalysed reaction is heme b + (2E,6E)-farnesyl diphosphate + H2O = Fe(II)-heme o + diphosphate. The protein operates within porphyrin-containing compound metabolism; heme O biosynthesis; heme O from protoheme: step 1/1. Its function is as follows. Converts heme B (protoheme IX) to heme O by substitution of the vinyl group on carbon 2 of heme B porphyrin ring with a hydroxyethyl farnesyl side group. The sequence is that of Protoheme IX farnesyltransferase from Sulfolobus acidocaldarius (strain ATCC 33909 / DSM 639 / JCM 8929 / NBRC 15157 / NCIMB 11770).